A 345-amino-acid polypeptide reads, in one-letter code: Biotin synthase (345 aa).

A Radical SAM core domain is found at 38-256 (RQVQVSTLLS…IAVARIMMPA (219 aa)). 3 residues coordinate [4Fe-4S] cluster: C53, C57, and C60. 4 residues coordinate [2Fe-2S] cluster: C97, C128, C188, and R260.

The protein belongs to the radical SAM superfamily. Biotin synthase family. Homodimer. [4Fe-4S] cluster is required as a cofactor. [2Fe-2S] cluster serves as cofactor.

It catalyses the reaction (4R,5S)-dethiobiotin + (sulfur carrier)-SH + 2 reduced [2Fe-2S]-[ferredoxin] + 2 S-adenosyl-L-methionine = (sulfur carrier)-H + biotin + 2 5'-deoxyadenosine + 2 L-methionine + 2 oxidized [2Fe-2S]-[ferredoxin]. Its pathway is cofactor biosynthesis; biotin biosynthesis; biotin from 7,8-diaminononanoate: step 2/2. Catalyzes the conversion of dethiobiotin (DTB) to biotin by the insertion of a sulfur atom into dethiobiotin via a radical-based mechanism. The chain is Biotin synthase from Pectobacterium atrosepticum (strain SCRI 1043 / ATCC BAA-672) (Erwinia carotovora subsp. atroseptica).